A 325-amino-acid polypeptide reads, in one-letter code: Lipid droplet-associated hydrolase (325 aa).

Catalysis depends on Ser139, which acts as the Nucleophile. Active-site charge relay system residues include Asp271 and His300.

The protein belongs to the AB hydrolase superfamily. LDAH family. As to expression, present in macrophage-rich areas in atherosclerotic lesions (at protein level). Expressed in monocytes and monocyte-derived macrophages (at protein level).

It is found in the lipid droplet. It localises to the endoplasmic reticulum. The catalysed reaction is a cholesterol ester + H2O = cholesterol + a fatty acid + H(+). Functionally, probable serine lipid hydrolase associated with lipid droplets. Has low cholesterol esterase activity. Appears to lack triglyceride lipase activity. Involved in cholesterol and triglyceride homeostasis; has opposing effects, stimulating cellular triglyceride accumulation and cellular cholesterol release. Acts antagonistically with PNPLA2/ATGL in regulation of cellular lipid stores. May regulate triglyceride accumulation indirectly through stimulation of PNPLA2/ATGL ubiquitination and proteasomal degradation. Promotes microtubule-dependent lipid droplet fusion. Highly expressed in macrophage-rich areas in atherosclerotic lesions, suggesting that it could promote cholesterol ester turnover in macrophages. This Homo sapiens (Human) protein is Lipid droplet-associated hydrolase.